The chain runs to 275 residues: Ribosomal RNA small subunit methyltransferase A (275 aa).

Residues Asn-19, Leu-21, Gly-46, Glu-71, Asp-94, and Asn-117 each coordinate S-adenosyl-L-methionine.

The protein belongs to the class I-like SAM-binding methyltransferase superfamily. rRNA adenine N(6)-methyltransferase family. RsmA subfamily.

Its subcellular location is the cytoplasm. The enzyme catalyses adenosine(1518)/adenosine(1519) in 16S rRNA + 4 S-adenosyl-L-methionine = N(6)-dimethyladenosine(1518)/N(6)-dimethyladenosine(1519) in 16S rRNA + 4 S-adenosyl-L-homocysteine + 4 H(+). Functionally, specifically dimethylates two adjacent adenosines (A1518 and A1519) in the loop of a conserved hairpin near the 3'-end of 16S rRNA in the 30S particle. May play a critical role in biogenesis of 30S subunits. The protein is Ribosomal RNA small subunit methyltransferase A of Burkholderia lata (strain ATCC 17760 / DSM 23089 / LMG 22485 / NCIMB 9086 / R18194 / 383).